The following is a 301-amino-acid chain: Putative MgpC-like protein MPN_093 (301 aa).

Belongs to the MgpC family.

The polypeptide is Putative MgpC-like protein MPN_093 (Mycoplasma pneumoniae (strain ATCC 29342 / M129 / Subtype 1) (Mycoplasmoides pneumoniae)).